The chain runs to 561 residues: Carboxylesterase 1E (561 aa).

The signal sequence occupies residues 1–18 (MCLYALILVFLAAFTAGG). 2 N-linked (GlcNAc...) asparagine glycosylation sites follow: Asn79 and Asn107. A disulfide bridge connects residues Cys87 and Cys116. Ser221 serves as the catalytic Acyl-ester intermediate. A disulfide bridge connects residues Cys273 and Cys284. Active-site charge relay system residues include Glu353 and His466. The N-linked (GlcNAc...) asparagine glycan is linked to Asn489. Positions 558-561 (HTEL) match the Prevents secretion from ER motif.

The protein belongs to the type-B carboxylesterase/lipase family. In terms of tissue distribution, expressed in liver.

The protein resides in the endoplasmic reticulum lumen. The protein localises to the microsome membrane. The catalysed reaction is a carboxylic ester + H2O = an alcohol + a carboxylate + H(+). It catalyses the reaction all-trans-retinyl hexadecanoate + H2O = all-trans-retinol + hexadecanoate + H(+). Involved in the detoxification of xenobiotics and in the activation of ester and amide prodrugs. Hydrolyzes retinyl esters. The polypeptide is Carboxylesterase 1E (Ces1e) (Rattus norvegicus (Rat)).